The sequence spans 310 residues: Thioredoxin reductase (310 aa).

Residue 35-42 (ERGMPGGQ) coordinates FAD. C134 and C137 are joined by a disulfide. FAD is bound at residue 277–286 (DVRDKGLRQI).

Belongs to the class-II pyridine nucleotide-disulfide oxidoreductase family. In terms of assembly, homodimer. FAD is required as a cofactor.

The protein localises to the cytoplasm. The enzyme catalyses [thioredoxin]-dithiol + NADP(+) = [thioredoxin]-disulfide + NADPH + H(+). This chain is Thioredoxin reductase (trxB), found in Staphylococcus epidermidis (strain ATCC 35984 / DSM 28319 / BCRC 17069 / CCUG 31568 / BM 3577 / RP62A).